The sequence spans 490 residues: Aspartyl/glutamyl-tRNA(Asn/Gln) amidotransferase subunit B (490 aa).

This sequence belongs to the GatB/GatE family. GatB subfamily. Heterotrimer of A, B and C subunits.

The catalysed reaction is L-glutamyl-tRNA(Gln) + L-glutamine + ATP + H2O = L-glutaminyl-tRNA(Gln) + L-glutamate + ADP + phosphate + H(+). It carries out the reaction L-aspartyl-tRNA(Asn) + L-glutamine + ATP + H2O = L-asparaginyl-tRNA(Asn) + L-glutamate + ADP + phosphate + 2 H(+). In terms of biological role, allows the formation of correctly charged Asn-tRNA(Asn) or Gln-tRNA(Gln) through the transamidation of misacylated Asp-tRNA(Asn) or Glu-tRNA(Gln) in organisms which lack either or both of asparaginyl-tRNA or glutaminyl-tRNA synthetases. The reaction takes place in the presence of glutamine and ATP through an activated phospho-Asp-tRNA(Asn) or phospho-Glu-tRNA(Gln). In Zymomonas mobilis subsp. mobilis (strain ATCC 31821 / ZM4 / CP4), this protein is Aspartyl/glutamyl-tRNA(Asn/Gln) amidotransferase subunit B.